The primary structure comprises 221 residues: UPF0502 protein VSAL_II0605 (221 aa).

This sequence belongs to the UPF0502 family.

The protein is UPF0502 protein VSAL_II0605 of Aliivibrio salmonicida (strain LFI1238) (Vibrio salmonicida (strain LFI1238)).